The following is a 688-amino-acid chain: Subtilisin-like protease 1 (688 aa).

An N-terminal signal peptide occupies residues 1-25 (MMLNKKVVALCTLTLHLFCIFLCLG). Positions 26-217 (KEVRSEENGK…IESDKLVSAD (192 aa)) are cleaved as a propeptide — inhibition peptide. Positions 99–129 (EKNKNDNHNNNNNNISSSSSSSSNTFGEEKE) are disordered. The segment covering 106-122 (HNNNNNNISSSSSSSSN) has biased composition (low complexity). An N-linked (GlcNAc...) asparagine glycan is attached at Asn112. 3 residues coordinate Ca(2+): Asn145, Thr148, and Pro150. A glycan (N-linked (GlcNAc...) asparagine) is linked at Asn171. A Ca(2+)-binding site is contributed by Gly205. An N-linked (GlcNAc...) asparagine glycan is attached at Asn261. Disordered stretches follow at residues 264 to 284 (HAAT…DTFS) and 303 to 332 (NNNN…RPGK). The segment covering 303–328 (NNNNYYYSHSSNGHNSSSRNSSSSRS) has biased composition (low complexity). 2 N-linked (GlcNAc...) asparagine glycosylation sites follow: Asn317 and Asn322. Asp337 is a binding site for Ca(2+). One can recognise a Peptidase S8 domain in the interval 343–661 (QWGLDLSRLD…AGYADINKAV (319 aa)). Disulfide bonds link Cys369–Cys479 and Cys458–Cys475. Asp372 acts as the Charge relay system in catalysis. Positions 381, 392, 396, 399, 400, 401, 402, 404, 406, 408, and 409 each coordinate Ca(2+). Asn417 is a glycosylation site (N-linked (GlcNAc...) asparagine). His428 functions as the Charge relay system in the catalytic mechanism. Ile439, Asn442, Ile444, and Val446 together coordinate Ca(2+). 3 N-linked (GlcNAc...) asparagine glycosylation sites follow: Asn488, Asn501, and Asn520. The cysteines at positions 521 and 534 are disulfide-linked. Asn603 carries N-linked (GlcNAc...) asparagine glycosylation. Ser606 functions as the Charge relay system in the catalytic mechanism. N-linked (GlcNAc...) asparagine glycosylation occurs at Asn675.

The protein belongs to the peptidase S8 family. As to quaternary structure, heterodimer between p54 form and prodomain p31; the interaction inhibits p54 catalytic activity. Heterodimer p31-p54 is monomeric at basic pH and dimeric at acidic pH; dimerization is driven by the N-terminal prodomain (p31). Requires Ca(2+) as cofactor. Post-translationally, the prodomain (p31) is cleaved, probably by autocatalysis, during the transport to or in the Golgi apparatus, and remains non-covalently associated with the p54 form as an inhibitor. p54 is further cleaved into the p47 form. The p54-to-p47 conversion can be also autocatalytic. This cleavage is likely occurring in the exoneme prior to egress and is mediated by PMX/plasmepsin X. Heterodimer p31-p54 is activated by cleavage of prodomain (p31) by the aspartic protease PMX; cleavage by PMX abolishes inhibitory capacity of p31. Primary autocatalytic processing of SUB1 is essential for parasite growth; the p54-to-p47 conversion is dispensable for SUB1 functions in the parasites. The disulfide bond between Cys-521 and Cys-534 acts as a redox-sensitive disulfide switch. The oxidized form is required for catalytic activity. In terms of processing, the relevance of the N-glycosylation is not clear. In an insect expression system, SUB1 glycosylation appears to affect its processing into the active mature form suggesting that SUB1 may not be N-glycosylated in parasites.

It localises to the secreted. The protein localises to the parasitophorous vacuole lumen. The catalysed reaction is Hydrolysis of proteins with broad specificity for peptide bonds, and a preference for a large uncharged residue in P1. Hydrolyzes peptide amides.. With respect to regulation, p54 and probably p47 forms are inhibited by the non-covalent interaction with the cleaved propeptide. Inhibited by subtilisin propeptide-like protein SUB1-ProM. Inhibited by small molecule MRT12113. Functionally, serine protease which plays an essential role in merozoite invasion of and egress from host erythrocytes by processing and activating various merozoite surface and parasitophorous vacuole proteins. Mediates the proteolytic maturation of serine proteases SERA4, SERA5 and SERA6 just prior to merozoite egress. Prior to merozoite egress, cleaves merozoite surface proteins MSP1, MSP6 and MSP7, which form the MSP1/6/7 complex, and thereby may prime the parasite cell surface for invasion of fresh erythrocytes. Prior to merozoite egress, cleaves MSRP2 converting it to MSRP2 p25 form, and RAP1 converting it to RAP1 p67 form. This Plasmodium falciparum (isolate 3D7) protein is Subtilisin-like protease 1.